Reading from the N-terminus, the 397-residue chain is Flavohemoprotein (397 aa).

Residues 4 to 140 (SFSPHTITLI…IANLLKDREA (137 aa)) enclose the Globin domain. H87 provides a ligand contact to heme b. Active-site charge relay system residues include Y97 and E139. A reductase region spans residues 151–397 (GGWIHWRRFV…FGPMDEEMAA (247 aa)). In terms of domain architecture, FAD-binding FR-type spans 154 to 258 (IHWRRFVISK…TPPVGDFFLP (105 aa)). FAD contacts are provided by residues Y192 and 207–210 (RNYS). 271-276 (GVGLTP) contacts NADP(+). 387–390 (FFGP) provides a ligand contact to FAD.

The protein belongs to the globin family. Two-domain flavohemoproteins subfamily. This sequence in the C-terminal section; belongs to the flavoprotein pyridine nucleotide cytochrome reductase family. The cofactor is heme b. FAD is required as a cofactor.

The catalysed reaction is 2 nitric oxide + NADPH + 2 O2 = 2 nitrate + NADP(+) + H(+). It catalyses the reaction 2 nitric oxide + NADH + 2 O2 = 2 nitrate + NAD(+) + H(+). Its function is as follows. Is involved in NO detoxification in an aerobic process, termed nitric oxide dioxygenase (NOD) reaction that utilizes O(2) and NAD(P)H to convert NO to nitrate, which protects the bacterium from various noxious nitrogen compounds. Therefore, plays a central role in the inducible response to nitrosative stress. This chain is Flavohemoprotein, found in Xylella fastidiosa (strain Temecula1 / ATCC 700964).